A 285-amino-acid chain; its full sequence is ATP synthase gamma chain (285 aa).

The protein belongs to the ATPase gamma chain family. As to quaternary structure, F-type ATPases have 2 components, CF(1) - the catalytic core - and CF(0) - the membrane proton channel. CF(1) has five subunits: alpha(3), beta(3), gamma(1), delta(1), epsilon(1). CF(0) has three main subunits: a, b and c.

It is found in the cell inner membrane. Functionally, produces ATP from ADP in the presence of a proton gradient across the membrane. The gamma chain is believed to be important in regulating ATPase activity and the flow of protons through the CF(0) complex. The sequence is that of ATP synthase gamma chain from Protochlamydia amoebophila (strain UWE25).